The chain runs to 275 residues: Melanoma-associated antigen B5 (275 aa).

Positions 1-33 are disordered; sequence MTSAGVFNAGSDERANSRDEEYPCSSEVSPSTE. Residues 11 to 21 are compositionally biased toward basic and acidic residues; the sequence is SDERANSRDEE. The span at 23–33 shows a compositional bias: low complexity; the sequence is PCSSEVSPSTE. The region spanning 40-239 is the MAGE domain; the sequence is INIKVGLLEQ…GAFSSQYEEA (200 aa).

Expressed in testis. Not expressed in other normal tissues, but is expressed in tumors of different histological origins.

The sequence is that of Melanoma-associated antigen B5 (MAGEB5) from Homo sapiens (Human).